We begin with the raw amino-acid sequence, 426 residues long: MKQFDVNEYMALVGRQARAASRGMARAGTAQKNRALLHLAAAIRRDAARLKDVNARDVERARANGQDAAFIDRLTLTDRAIETMAAGLEQIAALPDPIGEISNVKFRPTGIQVGQMRVPLGVIGIIYESRPNVTVDAAALCIKSGNATILRGGSEAIESNGALAALIEEGLADAGLPATAVQVVATPDRAAVGKLITMTEYVDVIVPRGGKSLIARLMEEARVPMIKHLDGICHVYIDVDADIDKAVRICDNAKTQRYAPCNTMETLLVAREVAARALTPLARIYQDKGVELRVCPDTRATLEAAGFSGLKDATEADWHTEYLAPILSIRTVDGVDAAIEHINTYGSAHTDSIVTENYSTGMRFLREVDSASVMINASTRFADGFEYGLGAEIGISNDKLHARGPVGLEGLTSLKYVVFGHGEIRT.

It belongs to the gamma-glutamyl phosphate reductase family.

The protein localises to the cytoplasm. The catalysed reaction is L-glutamate 5-semialdehyde + phosphate + NADP(+) = L-glutamyl 5-phosphate + NADPH + H(+). It functions in the pathway amino-acid biosynthesis; L-proline biosynthesis; L-glutamate 5-semialdehyde from L-glutamate: step 2/2. In terms of biological role, catalyzes the NADPH-dependent reduction of L-glutamate 5-phosphate into L-glutamate 5-semialdehyde and phosphate. The product spontaneously undergoes cyclization to form 1-pyrroline-5-carboxylate. This chain is Gamma-glutamyl phosphate reductase, found in Ralstonia nicotianae (strain ATCC BAA-1114 / GMI1000) (Ralstonia solanacearum).